A 65-amino-acid polypeptide reads, in one-letter code: Large ribosomal subunit protein bL28 (65 aa).

Belongs to the bacterial ribosomal protein bL28 family.

The protein is Large ribosomal subunit protein bL28 of Bifidobacterium animalis subsp. lactis (strain AD011).